A 302-amino-acid chain; its full sequence is Nucleotide-binding protein STH186 (302 aa).

ATP is bound at residue 15–22; sequence GMSGAGKT. Residue 66–69 coordinates GTP; it reads DIRG.

Belongs to the RapZ-like family.

Functionally, displays ATPase and GTPase activities. The sequence is that of Nucleotide-binding protein STH186 from Symbiobacterium thermophilum (strain DSM 24528 / JCM 14929 / IAM 14863 / T).